A 221-amino-acid polypeptide reads, in one-letter code: Carbonic anhydrase (221 aa).

Cys-38, Asp-40, His-99, and Cys-102 together coordinate Zn(2+).

Belongs to the beta-class carbonic anhydrase family. It depends on Zn(2+) as a cofactor.

It catalyses the reaction hydrogencarbonate + H(+) = CO2 + H2O. This Helicobacter pylori (strain J99 / ATCC 700824) (Campylobacter pylori J99) protein is Carbonic anhydrase (cynT).